Consider the following 139-residue polypeptide: D-ribose pyranase (139 aa).

The active-site Proton donor is the His20. Substrate contacts are provided by residues Asp28, His106, and 128-130 (YAN).

This sequence belongs to the RbsD / FucU family. RbsD subfamily. Homodecamer.

It is found in the cytoplasm. It catalyses the reaction beta-D-ribopyranose = beta-D-ribofuranose. Its pathway is carbohydrate metabolism; D-ribose degradation; D-ribose 5-phosphate from beta-D-ribopyranose: step 1/2. Its function is as follows. Catalyzes the interconversion of beta-pyran and beta-furan forms of D-ribose. The sequence is that of D-ribose pyranase from Aeromonas salmonicida (strain A449).